A 478-amino-acid chain; its full sequence is Proline--tRNA ligase (478 aa).

This sequence belongs to the class-II aminoacyl-tRNA synthetase family. ProS type 3 subfamily. As to quaternary structure, homodimer.

Its subcellular location is the cytoplasm. The enzyme catalyses tRNA(Pro) + L-proline + ATP = L-prolyl-tRNA(Pro) + AMP + diphosphate. Catalyzes the attachment of proline to tRNA(Pro) in a two-step reaction: proline is first activated by ATP to form Pro-AMP and then transferred to the acceptor end of tRNA(Pro). The chain is Proline--tRNA ligase from Clostridium botulinum (strain ATCC 19397 / Type A).